Here is an 85-residue protein sequence, read N- to C-terminus: Small ribosomal subunit protein uS17 (85 aa).

The protein belongs to the universal ribosomal protein uS17 family. As to quaternary structure, part of the 30S ribosomal subunit.

Functionally, one of the primary rRNA binding proteins, it binds specifically to the 5'-end of 16S ribosomal RNA. In Spiroplasma citri, this protein is Small ribosomal subunit protein uS17.